A 612-amino-acid chain; its full sequence is Dihydroxy-acid dehydratase (612 aa).

Asp-81 serves as a coordination point for Mg(2+). Cys-122 contributes to the [2Fe-2S] cluster binding site. Mg(2+) is bound by residues Asp-123 and Lys-124. An N6-carboxylysine modification is found at Lys-124. Cys-195 serves as a coordination point for [2Fe-2S] cluster. Glu-491 contacts Mg(2+). Residue Ser-517 is the Proton acceptor of the active site.

Belongs to the IlvD/Edd family. Homodimer. [2Fe-2S] cluster serves as cofactor. The cofactor is Mg(2+).

The catalysed reaction is (2R)-2,3-dihydroxy-3-methylbutanoate = 3-methyl-2-oxobutanoate + H2O. The enzyme catalyses (2R,3R)-2,3-dihydroxy-3-methylpentanoate = (S)-3-methyl-2-oxopentanoate + H2O. It participates in amino-acid biosynthesis; L-isoleucine biosynthesis; L-isoleucine from 2-oxobutanoate: step 3/4. The protein operates within amino-acid biosynthesis; L-valine biosynthesis; L-valine from pyruvate: step 3/4. Functionally, functions in the biosynthesis of branched-chain amino acids. Catalyzes the dehydration of (2R,3R)-2,3-dihydroxy-3-methylpentanoate (2,3-dihydroxy-3-methylvalerate) into 2-oxo-3-methylpentanoate (2-oxo-3-methylvalerate) and of (2R)-2,3-dihydroxy-3-methylbutanoate (2,3-dihydroxyisovalerate) into 2-oxo-3-methylbutanoate (2-oxoisovalerate), the penultimate precursor to L-isoleucine and L-valine, respectively. The sequence is that of Dihydroxy-acid dehydratase from Rhizobium etli (strain CIAT 652).